A 495-amino-acid chain; its full sequence is Probable cytosol aminopeptidase (495 aa).

The Mn(2+) site is built by Lys266 and Asp271. The active site involves Lys278. Positions 289, 348, and 350 each coordinate Mn(2+). Arg352 is a catalytic residue.

This sequence belongs to the peptidase M17 family. Mn(2+) serves as cofactor.

It localises to the cytoplasm. The catalysed reaction is Release of an N-terminal amino acid, Xaa-|-Yaa-, in which Xaa is preferably Leu, but may be other amino acids including Pro although not Arg or Lys, and Yaa may be Pro. Amino acid amides and methyl esters are also readily hydrolyzed, but rates on arylamides are exceedingly low.. It carries out the reaction Release of an N-terminal amino acid, preferentially leucine, but not glutamic or aspartic acids.. Its function is as follows. Presumably involved in the processing and regular turnover of intracellular proteins. Catalyzes the removal of unsubstituted N-terminal amino acids from various peptides. The sequence is that of Probable cytosol aminopeptidase from Pseudomonas aeruginosa (strain UCBPP-PA14).